Here is a 170-residue protein sequence, read N- to C-terminus: Lipoprotein signal peptidase (170 aa).

3 helical membrane passes run 5–25 (VYHQYWFWYLAAFVVFLLDQG), 70–90 (WFFTIVAVAASVLLIVWICRV), and 98–118 (AFALSFILGGAVGNLYDRIIH). Residues Asp-123 and Asp-141 contribute to the active site. The helical transmembrane segment at 137-157 (FNLADAAISLGAMVLIADLFI) threads the bilayer.

This sequence belongs to the peptidase A8 family.

It localises to the cell inner membrane. It catalyses the reaction Release of signal peptides from bacterial membrane prolipoproteins. Hydrolyzes -Xaa-Yaa-Zaa-|-(S,diacylglyceryl)Cys-, in which Xaa is hydrophobic (preferably Leu), and Yaa (Ala or Ser) and Zaa (Gly or Ala) have small, neutral side chains.. It participates in protein modification; lipoprotein biosynthesis (signal peptide cleavage). Functionally, this protein specifically catalyzes the removal of signal peptides from prolipoproteins. This chain is Lipoprotein signal peptidase, found in Cellvibrio japonicus (strain Ueda107) (Pseudomonas fluorescens subsp. cellulosa).